The primary structure comprises 510 residues: Acyl-CoA desaturase 1 (510 aa).

The Cytoplasmic segment spans residues 1–112; that stretch reads MPTSGTTIEL…TLNNWHQHLN (112 aa). Residues 113 to 133 traverse the membrane as a helical segment; the sequence is WLNMVLVCGMPMIGWYFALSG. Residues 134–138 are Lumenal-facing; that stretch reads KVPLH. The helical transmembrane segment at 139–159 threads the bilayer; it reads LNVFLFSVFYYAVGGVSITAG. The Cytoplasmic portion of the chain corresponds to 160-255; sequence YHRLWSHRSY…DWTIRFQHRH (96 aa). 5 residues coordinate Fe cation: histidine 161, histidine 166, histidine 198, histidine 201, and histidine 202. The short motif at 161–166 is the Histidine box-1 element; it reads HRLWSH. The short motif at 198-202 is the Histidine box-2 element; that stretch reads HRIHH. The helical transmembrane segment at 256-276 threads the bilayer; it reads YILLMLLTAFVIPTLICGYFF. Over 277–280 the chain is Lumenal; that stretch reads NDYM. A helical transmembrane segment spans residues 281–301; sequence GGLIYAGFIRVFVIQQATFCI. The Cytoplasmic segment spans residues 302 to 510; that stretch reads NSLAHYIGTQ…GEIYETGKFF (209 aa). Residues histidine 306, histidine 335, histidine 338, and histidine 339 each coordinate Fe cation. Positions 335–339 match the Histidine box-3 motif; that stretch reads HNFHH. The Cytochrome b5 heme-binding domain occupies 409–487; the sequence is LPMWDKQTFL…LADMRVAVIK (79 aa). 2 residues coordinate heme: histidine 444 and histidine 470.

This sequence belongs to the fatty acid desaturase type 1 family. Fe(2+) is required as a cofactor.

The protein resides in the endoplasmic reticulum membrane. It carries out the reaction octadecanoyl-CoA + 2 Fe(II)-[cytochrome b5] + O2 + 2 H(+) = (9Z)-octadecenoyl-CoA + 2 Fe(III)-[cytochrome b5] + 2 H2O. The catalysed reaction is hexadecanoyl-CoA + 2 Fe(II)-[cytochrome b5] + O2 + 2 H(+) = (9Z)-hexadecenoyl-CoA + 2 Fe(III)-[cytochrome b5] + 2 H2O. Its function is as follows. Stearoyl-CoA desaturase that utilizes O(2) and electrons from reduced cytochrome b5 to introduce the first double bond into saturated fatty acyl-CoA substrates. Catalyzes the insertion of a cis double bond at the delta-9 position into fatty acyl-CoA substrates including palmitoyl-CoA and stearoyl-CoA. Required for the biosynthesis of membrane phospholipids, cholesterol esters and triglycerides. Regulates fatty acid desaturation, that is, the ratio of unsaturated versus saturated fatty acyl chains, by competing with the acyltransferase STC1 for the common substrate C16:0-CoA. SCT1 sequesters C16:0-CoA into lipids, thereby shielding it from desaturation by OLE1. The protein is Acyl-CoA desaturase 1 (OLE1) of Saccharomyces cerevisiae (strain ATCC 204508 / S288c) (Baker's yeast).